The chain runs to 245 residues: tRNA1(Val) (adenine(37)-N6)-methyltransferase (245 aa).

The protein belongs to the methyltransferase superfamily. tRNA (adenine-N(6)-)-methyltransferase family.

It is found in the cytoplasm. The catalysed reaction is adenosine(37) in tRNA1(Val) + S-adenosyl-L-methionine = N(6)-methyladenosine(37) in tRNA1(Val) + S-adenosyl-L-homocysteine + H(+). Specifically methylates the adenine in position 37 of tRNA(1)(Val) (anticodon cmo5UAC). This Escherichia coli O7:K1 (strain IAI39 / ExPEC) protein is tRNA1(Val) (adenine(37)-N6)-methyltransferase.